The primary structure comprises 353 residues: Holliday junction branch migration complex subunit RuvB (353 aa).

Positions 1 to 182 (MPERLITPKG…FGIVQRLEFY (182 aa)) are large ATPase domain (RuvB-L). ATP contacts are provided by residues Ile21, Arg22, Gly63, Lys66, Thr67, Thr68, 129–131 (EDF), Arg172, Tyr182, and Arg219. A Mg(2+)-binding site is contributed by Thr67. The segment at 183-253 (NVQDLTRIVQ…VADRALDLLD (71 aa)) is small ATPAse domain (RuvB-S). The tract at residues 256 to 353 (VQGFDAQDRR…QEEGGGEGKL (98 aa)) is head domain (RuvB-H). DNA-binding residues include Arg292, Arg311, and Arg316.

This sequence belongs to the RuvB family. As to quaternary structure, homohexamer. Forms an RuvA(8)-RuvB(12)-Holliday junction (HJ) complex. HJ DNA is sandwiched between 2 RuvA tetramers; dsDNA enters through RuvA and exits via RuvB. An RuvB hexamer assembles on each DNA strand where it exits the tetramer. Each RuvB hexamer is contacted by two RuvA subunits (via domain III) on 2 adjacent RuvB subunits; this complex drives branch migration. In the full resolvosome a probable DNA-RuvA(4)-RuvB(12)-RuvC(2) complex forms which resolves the HJ.

The protein resides in the cytoplasm. It carries out the reaction ATP + H2O = ADP + phosphate + H(+). In terms of biological role, the RuvA-RuvB-RuvC complex processes Holliday junction (HJ) DNA during genetic recombination and DNA repair, while the RuvA-RuvB complex plays an important role in the rescue of blocked DNA replication forks via replication fork reversal (RFR). RuvA specifically binds to HJ cruciform DNA, conferring on it an open structure. The RuvB hexamer acts as an ATP-dependent pump, pulling dsDNA into and through the RuvAB complex. RuvB forms 2 homohexamers on either side of HJ DNA bound by 1 or 2 RuvA tetramers; 4 subunits per hexamer contact DNA at a time. Coordinated motions by a converter formed by DNA-disengaged RuvB subunits stimulates ATP hydrolysis and nucleotide exchange. Immobilization of the converter enables RuvB to convert the ATP-contained energy into a lever motion, pulling 2 nucleotides of DNA out of the RuvA tetramer per ATP hydrolyzed, thus driving DNA branch migration. The RuvB motors rotate together with the DNA substrate, which together with the progressing nucleotide cycle form the mechanistic basis for DNA recombination by continuous HJ branch migration. Branch migration allows RuvC to scan DNA until it finds its consensus sequence, where it cleaves and resolves cruciform DNA. This Thioalkalivibrio sulfidiphilus (strain HL-EbGR7) protein is Holliday junction branch migration complex subunit RuvB.